A 352-amino-acid polypeptide reads, in one-letter code: Long-chain-alcohol O-fatty-acyltransferase (352 aa).

8 consecutive transmembrane segments (helical) span residues 13 to 33, 34 to 54, 67 to 87, 128 to 148, 155 to 175, 239 to 259, 267 to 287, and 303 to 323; these read VWIS…VAPH, GGAL…FLPL, LYLV…LGPL, KVVL…IYEF, FVIS…TLAA, VAGA…VFFF, SWEV…EMVV, and GALT…PQLV.

It belongs to the wax synthase family.

It localises to the microsome membrane. It carries out the reaction a long chain fatty alcohol + a fatty acyl-CoA = a wax ester + CoA. In terms of biological role, catalyzes the final step in the synthesis of long-chain linear esters (waxes). Has activity with both saturated and monounsaturated acyl-CoA ranging from 14 to 24 carbons in length, but C20:1 acyl-CoA is the preferred substrate. The polypeptide is Long-chain-alcohol O-fatty-acyltransferase (Simmondsia chinensis (Jojoba)).